The primary structure comprises 426 residues: Transcription factor bHLH60 (426 aa).

Composition is skewed to polar residues over residues Gln-117–Asn-137 and Thr-148–Arg-172. The tract at residues Gln-117–Tyr-201 is disordered. A compositionally biased stretch (basic and acidic residues) spans Lys-191–Pro-200. The region spanning Gln-210–Leu-307 is the bHLH domain. Residues His-367–Asn-398 are disordered.

In terms of assembly, homodimer. As to expression, expressed constitutively in roots, leaves, stems, and flowers.

The protein localises to the nucleus. This chain is Transcription factor bHLH60 (BHLH60), found in Arabidopsis thaliana (Mouse-ear cress).